The primary structure comprises 299 residues: Protease HtpX homolog (299 aa).

Transmembrane regions (helical) follow at residues 15 to 35 and 39 to 59; these read ILLL…GYLF and GLGG…SMIF. His-143 serves as a coordination point for Zn(2+). Glu-144 is an active-site residue. His-147 is a Zn(2+) binding site. 2 consecutive transmembrane segments (helical) span residues 158–178 and 198–218; these read IAVA…RMMW and IIML…ATLV. Glu-227 serves as a coordination point for Zn(2+).

This sequence belongs to the peptidase M48B family. It depends on Zn(2+) as a cofactor.

Its subcellular location is the cell membrane. This is Protease HtpX homolog from Streptococcus pneumoniae (strain Hungary19A-6).